The sequence spans 164 residues: Peptide deformylase (164 aa).

Fe cation contacts are provided by Cys-87 and His-129. Glu-130 is an active-site residue. Residue His-133 participates in Fe cation binding.

The protein belongs to the polypeptide deformylase family. The cofactor is Fe(2+).

It carries out the reaction N-terminal N-formyl-L-methionyl-[peptide] + H2O = N-terminal L-methionyl-[peptide] + formate. Functionally, removes the formyl group from the N-terminal Met of newly synthesized proteins. Requires at least a dipeptide for an efficient rate of reaction. N-terminal L-methionine is a prerequisite for activity but the enzyme has broad specificity at other positions. The sequence is that of Peptide deformylase from Thermotoga sp. (strain RQ2).